The following is a 319-amino-acid chain: MSTVIAVVGPTAVGKSDLSVALALRLTEHGLPAEIINADSMQLYQGMDIGTAKLTPEERRGVPHHLLDVWEVTQTANVADYQRMARAVIDDLHAAGRVPVLVGGSGLYVRAALDELDFPGTDPKVRARLEAELAEQGPLALHARLARLDPEAARAILPTNGRRIVRALEVIEITGGPFTATLPDHVSRYPCVQIGLTAPRPELDERIALRVDRMWEAGLVDEVRALEKAGLRDGFTASRALGYAQILRFLAGECTEEEAKEETVRATRRFARRQESWFRRDPRVHWLPYDAPDLVDRAFALVCEHSDLCFRSATRDEQS.

Residue 9–16 participates in ATP binding; it reads GPTAVGKS. 11-16 is a binding site for substrate; sequence TAVGKS. The interaction with substrate tRNA stretch occupies residues 39 to 42; that stretch reads DSMQ.

The protein belongs to the IPP transferase family. As to quaternary structure, monomer. Requires Mg(2+) as cofactor.

It carries out the reaction adenosine(37) in tRNA + dimethylallyl diphosphate = N(6)-dimethylallyladenosine(37) in tRNA + diphosphate. In terms of biological role, catalyzes the transfer of a dimethylallyl group onto the adenine at position 37 in tRNAs that read codons beginning with uridine, leading to the formation of N6-(dimethylallyl)adenosine (i(6)A). This Thermobifida fusca (strain YX) protein is tRNA dimethylallyltransferase.